A 238-amino-acid polypeptide reads, in one-letter code: MQAVLLVVALFGAALADPPKQIHLPTPKVKRVEKLAHQEHAVNVVQAVPITKTVVRTVNVPKTLIQEVPIHVYTDLVLKSPVPRRKVIDIKKTVLQPHIRHVPVDQPYVVHRRVPVIHTKIVRQPRPVHRIVKIPKLKVVQKQLNRIIDVPQIVTKERIHRVIKPVPVERTRIQHVDVDVPMRVVVPEPVVQDRHTQSVETVPVPHDVVRKVKVPKTFVLKDLIPVPEKAGRHYSSDK.

Residues 1-16 (MQAVLLVVALFGAALA) form the signal peptide.

In terms of tissue distribution, prismatic layer of shell (at protein level). Expressed primarily in the mantle with highest level in the mantle edge and lower level in the mantle pallium.

It is found in the secreted. This is Valine-rich protein from Margaritifera margaritifera (Freshwater pearl mussel).